The chain runs to 59 residues: Light-harvesting protein B-800-850 alpha chain E (59 aa).

Residues 1 to 11 (MNQGRIWTVVK) are Cytoplasmic-facing. A helical transmembrane segment spans residues 12–35 (PTVGLPLLLGSVTVIAILVHFAVL). His31 is an a bacteriochlorophyll binding site. Topologically, residues 36-59 (SNTTWFSKYWNGKAAAIESSVSIG) are periplasmic.

The protein belongs to the antenna complex alpha subunit family. The core complex is formed by different alpha and beta chains, binding bacteriochlorophyll molecules, and arranged most probably in tetrameric structures disposed around the reaction center. The non-pigmented gamma chains may constitute additional components.

Its subcellular location is the cell inner membrane. Functionally, antenna complexes are light-harvesting systems, which transfer the excitation energy to the reaction centers. The sequence is that of Light-harvesting protein B-800-850 alpha chain E (pucAE) from Rhodopseudomonas palustris (strain ATCC BAA-98 / CGA009).